The chain runs to 118 residues: UPF0102 protein Swit_0572 (118 aa).

Belongs to the UPF0102 family.

This Rhizorhabdus wittichii (strain DSM 6014 / CCUG 31198 / JCM 15750 / NBRC 105917 / EY 4224 / RW1) (Sphingomonas wittichii) protein is UPF0102 protein Swit_0572.